The primary structure comprises 887 residues: DNA mismatch repair protein MutS (887 aa).

An ATP-binding site is contributed by 621–628 (GPNMGGKS). The segment at 828–853 (AEPEPNKPAAAAKTKPASPQPDLFAS) is disordered. The span at 834-848 (KPAAAAKTKPASPQP) shows a compositional bias: low complexity.

The protein belongs to the DNA mismatch repair MutS family.

Its function is as follows. This protein is involved in the repair of mismatches in DNA. It is possible that it carries out the mismatch recognition step. This protein has a weak ATPase activity. In Saccharophagus degradans (strain 2-40 / ATCC 43961 / DSM 17024), this protein is DNA mismatch repair protein MutS.